The sequence spans 479 residues: Ribosomal RNA small subunit methyltransferase F (479 aa).

S-adenosyl-L-methionine-binding positions include 125–131 (AAAPGSK), glutamate 149, aspartate 176, and aspartate 194. Catalysis depends on cysteine 247, which acts as the Nucleophile.

The protein belongs to the class I-like SAM-binding methyltransferase superfamily. RsmB/NOP family.

It is found in the cytoplasm. It carries out the reaction cytidine(1407) in 16S rRNA + S-adenosyl-L-methionine = 5-methylcytidine(1407) in 16S rRNA + S-adenosyl-L-homocysteine + H(+). Functionally, specifically methylates the cytosine at position 1407 (m5C1407) of 16S rRNA. In Escherichia fergusonii (strain ATCC 35469 / DSM 13698 / CCUG 18766 / IAM 14443 / JCM 21226 / LMG 7866 / NBRC 102419 / NCTC 12128 / CDC 0568-73), this protein is Ribosomal RNA small subunit methyltransferase F.